The sequence spans 390 residues: 4-hydroxy-3-methylbut-2-en-1-yl diphosphate synthase (flavodoxin) (390 aa).

Residues C281, C284, C316, and E323 each contribute to the [4Fe-4S] cluster site.

Belongs to the IspG family. The cofactor is [4Fe-4S] cluster.

The catalysed reaction is (2E)-4-hydroxy-3-methylbut-2-enyl diphosphate + oxidized [flavodoxin] + H2O + 2 H(+) = 2-C-methyl-D-erythritol 2,4-cyclic diphosphate + reduced [flavodoxin]. Its pathway is isoprenoid biosynthesis; isopentenyl diphosphate biosynthesis via DXP pathway; isopentenyl diphosphate from 1-deoxy-D-xylulose 5-phosphate: step 5/6. Its function is as follows. Converts 2C-methyl-D-erythritol 2,4-cyclodiphosphate (ME-2,4cPP) into 1-hydroxy-2-methyl-2-(E)-butenyl 4-diphosphate. The protein is 4-hydroxy-3-methylbut-2-en-1-yl diphosphate synthase (flavodoxin) of Salinispora tropica (strain ATCC BAA-916 / DSM 44818 / JCM 13857 / NBRC 105044 / CNB-440).